A 78-amino-acid chain; its full sequence is Mandibular organ-inhibiting hormone 2 (78 aa).

3 disulfide bridges follow: cysteine 7-cysteine 44, cysteine 24-cysteine 40, and cysteine 27-cysteine 53.

This sequence belongs to the arthropod CHH/MIH/GIH/VIH hormone family. As to expression, produced by the medulla terminalis X-organ in the eyestalks and transported to the sinus gland where it is stored and released.

Its subcellular location is the secreted. Its function is as follows. Represses the synthesis of methyl farnesoate, the precursor of insect juvenile hormone III in the mandibular organ. In Cancer pagurus (Rock crab), this protein is Mandibular organ-inhibiting hormone 2.